We begin with the raw amino-acid sequence, 203 residues long: GTP cyclohydrolase-2 (203 aa).

49 to 53 (RIHSE) contributes to the GTP binding site. Zn(2+) is bound by residues Cys-54, Cys-65, and Cys-67. Residues Gln-70, 92–94 (EGR), and Thr-114 each bind GTP. Asp-126 functions as the Proton acceptor in the catalytic mechanism. Residue Arg-128 is the Nucleophile of the active site. Positions 149 and 154 each coordinate GTP.

The protein belongs to the GTP cyclohydrolase II family. Requires Zn(2+) as cofactor.

The catalysed reaction is GTP + 4 H2O = 2,5-diamino-6-hydroxy-4-(5-phosphoribosylamino)-pyrimidine + formate + 2 phosphate + 3 H(+). It participates in cofactor biosynthesis; riboflavin biosynthesis; 5-amino-6-(D-ribitylamino)uracil from GTP: step 1/4. In terms of biological role, catalyzes the conversion of GTP to 2,5-diamino-6-ribosylamino-4(3H)-pyrimidinone 5'-phosphate (DARP), formate and pyrophosphate. In Shewanella oneidensis (strain ATCC 700550 / JCM 31522 / CIP 106686 / LMG 19005 / NCIMB 14063 / MR-1), this protein is GTP cyclohydrolase-2.